The following is a 28-amino-acid chain: Potassium channel toxin alpha-KTx 9.3 (28 aa).

3 cysteine pairs are disulfide-bonded: Cys-3-Cys-19, Cys-6-Cys-24, and Cys-10-Cys-26.

It belongs to the short scorpion toxin superfamily. Potassium channel inhibitor family. Alpha-KTx 09 subfamily. Expressed by the venom gland.

The protein resides in the secreted. Functionally, inhibits voltage-gated potassium channels. This Aegaeobuthus nigrocinctus (Scorpion) protein is Potassium channel toxin alpha-KTx 9.3.